A 207-amino-acid polypeptide reads, in one-letter code: Outer-membrane lipoprotein LolB (207 aa).

Residues 1–21 (MPMRKRHFYRLLPLASLLLAA) form the signal peptide. C22 is lipidated: N-palmitoyl cysteine. C22 carries the S-diacylglycerol cysteine lipid modification.

The protein belongs to the LolB family. In terms of assembly, monomer.

It is found in the cell outer membrane. Functionally, plays a critical role in the incorporation of lipoproteins in the outer membrane after they are released by the LolA protein. The protein is Outer-membrane lipoprotein LolB of Yersinia pseudotuberculosis serotype O:1b (strain IP 31758).